Reading from the N-terminus, the 131-residue chain is uncharacterized protein (131 aa).

Positions 1–26 are cleaved as a signal peptide; sequence MKKIVAAIVVIGLVFIAFFYLYSRSG.

This is an uncharacterized protein from Bacillus subtilis (strain 168).